Reading from the N-terminus, the 457-residue chain is F-box only protein 13 (457 aa).

Positions 64-110 constitute an F-box domain; that stretch reads EFPMDDLNDDVLERVLSWLPTSCFFRMSSVCKRWKSSQTSKSFKLAC.

This is F-box only protein 13 (FBX13) from Arabidopsis thaliana (Mouse-ear cress).